Reading from the N-terminus, the 363-residue chain is Chorismate synthase (363 aa).

Positions 48 and 54 each coordinate NADP(+). FMN is bound by residues 125 to 127, 237 to 238, Gly-277, 292 to 296, and Arg-318; these read RSS, NA, and KPTSS.

Belongs to the chorismate synthase family. As to quaternary structure, homotetramer. FMNH2 is required as a cofactor.

The catalysed reaction is 5-O-(1-carboxyvinyl)-3-phosphoshikimate = chorismate + phosphate. It participates in metabolic intermediate biosynthesis; chorismate biosynthesis; chorismate from D-erythrose 4-phosphate and phosphoenolpyruvate: step 7/7. Functionally, catalyzes the anti-1,4-elimination of the C-3 phosphate and the C-6 proR hydrogen from 5-enolpyruvylshikimate-3-phosphate (EPSP) to yield chorismate, which is the branch point compound that serves as the starting substrate for the three terminal pathways of aromatic amino acid biosynthesis. This reaction introduces a second double bond into the aromatic ring system. This is Chorismate synthase from Pseudomonas putida (strain ATCC 700007 / DSM 6899 / JCM 31910 / BCRC 17059 / LMG 24140 / F1).